The following is a 260-amino-acid chain: Archaerhodopsin-1 (260 aa).

A propeptide spanning residues 1–6 (MDPIAL) is cleaved from the precursor. Topologically, residues 7–20 (TAAVGADLLGDGRP) are extracellular. The helical transmembrane segment at 21–42 (ETLWLGIGTLLMLIGTFYFIVK) threads the bilayer. Residues 43 to 51 (GWGVTDKEA) lie on the Cytoplasmic side of the membrane. Residues 52–73 (REYYSITILVPGIASAAYLSMF) form a helical membrane-spanning segment. The Extracellular portion of the chain corresponds to 74 to 91 (FGIGLTEVQVGSEMLDIY). A helical transmembrane segment spans residues 92–113 (YARYADWLFTTPLLLLDLALLA). Residues 114–116 (KVD) are Cytoplasmic-facing. A helical membrane pass occupies residues 117–139 (RVSIGTLVGVDALMIVTGLVGAL). Over 140 to 143 (SHTP) the chain is Extracellular. Residues 144–172 (LARYTWWLFSTICMIVVLYFLATSLRAAA) traverse the membrane as a helical segment. At 173 to 176 (KERG) the chain is on the cytoplasmic side. A helical transmembrane segment spans residues 177–204 (PEVASTFNTLTALVLVLWTAYPILWIIG). Residues 205–212 (TEGAGVVG) lie on the Extracellular side of the membrane. The helical transmembrane segment at 213–245 (LGIETLLFMVLDVTAKVGFGFILLRSRAILGDT) threads the bilayer. Lysine 228 carries the N6-(retinylidene)lysine modification. Residues 246–260 (EAPEPSAGAEASAAD) lie on the Cytoplasmic side of the membrane.

This sequence belongs to the archaeal/bacterial/fungal opsin family.

The protein localises to the cell membrane. Functionally, light-driven proton pump. It may interact with bacterioruberin in the claret membrane. The protein is Archaerhodopsin-1 of Halorubrum ezzemoulense (Halorubrum chaoviator).